A 196-amino-acid polypeptide reads, in one-letter code: uncharacterized protein (196 aa).

Residues 21–35 show a composition bias toward basic and acidic residues; the sequence is ESRRKDGSVRRERAV. 2 disordered regions span residues 21–53 and 65–196; these read ESRRKDGSVRRERAVKPGYTAPEDIKRYRPGRG and LQLS…KEKE. Positions 66-75 are enriched in polar residues; it reads QLSNDASTSK. Basic and acidic residues-rich tracts occupy residues 84–94, 100–143, and 173–196; these read ELEKEKLERPL, EKND…KDFK, and KMSKRENKKSINTVDKKTGYKEKE.

This is an uncharacterized protein from Schizosaccharomyces pombe (strain 972 / ATCC 24843) (Fission yeast).